A 382-amino-acid chain; its full sequence is MLEPPNHQTTAKTDQAASMSIQLLLFVDERPSSHEYIQPIRDYIKTVSQDCPCQLEVIEIHEQPHLVEHFRLVATPALVKVVPEPRQTLAGSNLVNQLKKWWPKWLSSLEENHHDSLLEKSSNVGYSGELMRLSDEIFRLKKDKENLQEQLKFKDQVLAMLAHDLRSPLTAASIAVETLELAKNQDPTEKQQKLTAQLFNQTRNQFRVMNRLITDILQASKSMNAQLQVHQTEVFLPRLSKEIVEQYNDLLTEKSLKLIQDVPQDVPGVYADEELIRQVIVNLIDNAIKYTSEGGEITLSILHRTSQKVQVSVCDTGPGIPEEKQERIFEGHFRLQRDQGKEGYGLGLSLCRKIIRVHYGQIWVDSVPGQGSCFHFTLPVYR.

In terms of domain architecture, Histidine kinase spans 160–382 (MLAHDLRSPL…CFHFTLPVYR (223 aa)). Residue histidine 163 is modified to Phosphohistidine; by autocatalysis.

In terms of assembly, homooligomerizes. Interacts with KaiC. Participates in the KaiABC clock complex, whose core is composed of a KaiC homohexamer, 6 KaiB and up to 6 KaiA dimers. SasA and KaiB(fs) compete to bind to KaiC.

It carries out the reaction ATP + protein L-histidine = ADP + protein N-phospho-L-histidine.. Functionally, member of the two-component regulatory system SasA/RpaA involved in genome-wide circadian gene expression. One of several clock output pathways. Participates in the Kai clock protein complex, the main circadian regulator in cyanobacteria, via its interaction with KaiC. KaiC enhances the autophosphorylation activity of SasA, which then transfers its phosphate group to RpaA to activate it. In addition to its output function, recruits fold-shifted KaiB (KaiB(fs)) to KaiC to cooperatively form the KaiB(6):KaiC(6) complex (independent of SasA kinase activity). Required for robustness of the circadian rhythm of gene expression and is involved in clock output, also required for adaptation to light/dark cycles. This chain is Adaptive-response sensory kinase SasA, found in Crocosphaera subtropica (strain ATCC 51142 / BH68) (Cyanothece sp. (strain ATCC 51142)).